A 793-amino-acid polypeptide reads, in one-letter code: Pentatricopeptide repeat-containing protein At1g03100, mitochondrial (793 aa).

Residues 1–87 (MFSLRKTKLQ…REAISSISGS (87 aa)) constitute a mitochondrion transit peptide. PPR repeat units follow at residues 257 to 291 (NTQV…GVKA), 292 to 322 (DANL…IDEA), 330 to 364 (FWQF…GKVA), 458 to 492 (TEEI…DSPV), 495 to 529 (DNSM…GVRT), 530 to 564 (GSSV…GIQL), 565 to 599 (DSSC…KILR), 601 to 631 (GNQK…IREV), 637 to 671 (GVHD…GHSP), 672 to 707 (NAQT…AAAT), and 713 to 747 (DQEL…NMFV).

This sequence belongs to the PPR family. P subfamily.

Its subcellular location is the mitochondrion. The polypeptide is Pentatricopeptide repeat-containing protein At1g03100, mitochondrial (Arabidopsis thaliana (Mouse-ear cress)).